A 310-amino-acid polypeptide reads, in one-letter code: DNA-directed RNA polymerase subunit alpha (310 aa).

The alpha N-terminal domain (alpha-NTD) stretch occupies residues 1-230 (MLGKVNGVQI…KLFNPLRVLD (230 aa)). The tract at residues 242–310 (NSLIKQKLIE…YKKFGVKLKH (69 aa)) is alpha C-terminal domain (alpha-CTD).

It belongs to the RNA polymerase alpha chain family. As to quaternary structure, in plastids the minimal PEP RNA polymerase catalytic core is composed of four subunits: alpha, beta, beta', and beta''. When a (nuclear-encoded) sigma factor is associated with the core the holoenzyme is formed, which can initiate transcription.

It localises to the plastid. Its subcellular location is the chloroplast. It catalyses the reaction RNA(n) + a ribonucleoside 5'-triphosphate = RNA(n+1) + diphosphate. In terms of biological role, DNA-dependent RNA polymerase catalyzes the transcription of DNA into RNA using the four ribonucleoside triphosphates as substrates. This chain is DNA-directed RNA polymerase subunit alpha, found in Cyanidium caldarium (Red alga).